The following is a 53-amino-acid chain: GDDVKSACCDTCLCTKSNPPICRCVDIRETCHSACNSCVCTASIPPQCRFCYK.

5 cysteine pairs are disulfide-bonded: C9-C24, C12-C51, C14-C22, C31-C38, and C40-C48.

Dimer.

Its function is as follows. Inhibits trypsin (IC(50)=6.20 nM), neutrophil elastase (ELANE) and, to a lesser extent, alpha-chymotrypsin (IC(50)=3.44 uM). This chain is Bowman-Birk type proteinase inhibitor 1, found in Lathyrus sativus (White vetchling).